A 257-amino-acid chain; its full sequence is 3-methyl-2-oxobutanoate hydroxymethyltransferase (257 aa).

Mg(2+)-binding residues include Asp42 and Asp86. 3-methyl-2-oxobutanoate is bound by residues 42 to 43 (DS), Asp86, and Lys116. Mg(2+) is bound at residue Glu118. Glu185 functions as the Proton acceptor in the catalytic mechanism.

The protein belongs to the PanB family. Homodecamer; pentamer of dimers. Mg(2+) is required as a cofactor.

It localises to the cytoplasm. The catalysed reaction is 3-methyl-2-oxobutanoate + (6R)-5,10-methylene-5,6,7,8-tetrahydrofolate + H2O = 2-dehydropantoate + (6S)-5,6,7,8-tetrahydrofolate. The protein operates within cofactor biosynthesis; (R)-pantothenate biosynthesis; (R)-pantoate from 3-methyl-2-oxobutanoate: step 1/2. Functionally, catalyzes the reversible reaction in which hydroxymethyl group from 5,10-methylenetetrahydrofolate is transferred onto alpha-ketoisovalerate to form ketopantoate. The protein is 3-methyl-2-oxobutanoate hydroxymethyltransferase of Prochlorococcus marinus (strain MIT 9515).